The sequence spans 187 residues: NADH-quinone oxidoreductase subunit C 2 (187 aa).

Residues 153-187 (YKDKLNPFGAEGPPPTQPDLATRDIPQGRPSTPES) are disordered.

This sequence belongs to the complex I 30 kDa subunit family. NDH-1 is composed of 14 different subunits. Subunits NuoB, C, D, E, F, and G constitute the peripheral sector of the complex.

The protein resides in the cell inner membrane. It catalyses the reaction a quinone + NADH + 5 H(+)(in) = a quinol + NAD(+) + 4 H(+)(out). In terms of biological role, NDH-1 shuttles electrons from NADH, via FMN and iron-sulfur (Fe-S) centers, to quinones in the respiratory chain. The immediate electron acceptor for the enzyme in this species is believed to be ubiquinone. Couples the redox reaction to proton translocation (for every two electrons transferred, four hydrogen ions are translocated across the cytoplasmic membrane), and thus conserves the redox energy in a proton gradient. This Rhizobium etli (strain CIAT 652) protein is NADH-quinone oxidoreductase subunit C 2.